We begin with the raw amino-acid sequence, 101 residues long: uncharacterized protein (101 aa).

2 helical membrane-spanning segments follow: residues leucine 35–isoleucine 55 and phenylalanine 66–phenylalanine 86.

Its subcellular location is the membrane. This is an uncharacterized protein from Saccharomyces cerevisiae (strain ATCC 204508 / S288c) (Baker's yeast).